The following is a 296-amino-acid chain: tRNA pseudouridine synthase B (296 aa).

Residue aspartate 38 is the Nucleophile of the active site.

This sequence belongs to the pseudouridine synthase TruB family. Type 1 subfamily.

The enzyme catalyses uridine(55) in tRNA = pseudouridine(55) in tRNA. Its function is as follows. Responsible for synthesis of pseudouridine from uracil-55 in the psi GC loop of transfer RNAs. This is tRNA pseudouridine synthase B from Ehrlichia chaffeensis (strain ATCC CRL-10679 / Arkansas).